The primary structure comprises 686 residues: Methionine--tRNA ligase (686 aa).

The 'HIGH' region signature appears at 13–23; the sequence is PYANGQIHIGH. 4 residues coordinate Zn(2+): cysteine 144, cysteine 147, cysteine 157, and cysteine 160. Residues 335 to 339 carry the 'KMSKS' region motif; it reads KMSKS. Lysine 338 serves as a coordination point for ATP. A tRNA-binding domain is found at 580 to 686; that stretch reads DFAKVDLRVA…EGAVPGMRIG (107 aa).

It belongs to the class-I aminoacyl-tRNA synthetase family. MetG type 1 subfamily. In terms of assembly, homodimer. It depends on Zn(2+) as a cofactor.

It is found in the cytoplasm. It carries out the reaction tRNA(Met) + L-methionine + ATP = L-methionyl-tRNA(Met) + AMP + diphosphate. Is required not only for elongation of protein synthesis but also for the initiation of all mRNA translation through initiator tRNA(fMet) aminoacylation. In Cupriavidus necator (strain ATCC 17699 / DSM 428 / KCTC 22496 / NCIMB 10442 / H16 / Stanier 337) (Ralstonia eutropha), this protein is Methionine--tRNA ligase.